Reading from the N-terminus, the 3184-residue chain is WD repeat- and FYVE domain-containing protein 4 (3184 aa).

The segment covering Met-1–Ser-18 has biased composition (basic and acidic residues). Disordered regions lie at residues Met-1 to Ser-39, Ser-944 to Thr-993, Val-1837 to Pro-1869, and Ala-2309 to Glu-2335. Residues Gln-981–Thr-993 show a composition bias toward polar residues. A compositionally biased stretch (basic and acidic residues) spans Arg-2314–His-2324. The region spanning Leu-2385 to Cys-2510 is the BEACH-type PH domain. The 295-residue stretch at Ser-2527–Arg-2821 folds into the BEACH domain. 6 WD repeats span residues Met-2863 to Asp-2922, Lys-2923 to Leu-2972, Arg-2973 to Leu-3014, Thr-3015 to Leu-3057, Ala-3058 to Val-3141, and Ser-3142 to Gly-3184. The interval Ser-3107–Lys-3128 is disordered.

As to quaternary structure, interacts with HSP90AB1.

Its subcellular location is the early endosome. The protein localises to the endoplasmic reticulum. In terms of biological role, plays a critical role in the regulation of cDC1-mediated cross-presentation of viral and tumor antigens in dendritic cells. Mechanistically, acts near the plasma membrane and interacts with endosomal membranes to promote endosomal-to-cytosol antigen trafficking. Also plays a role in B-cell survival through regulation of autophagy. In Homo sapiens (Human), this protein is WD repeat- and FYVE domain-containing protein 4 (WDFY4).